The chain runs to 162 residues: 2-C-methyl-D-erythritol 2,4-cyclodiphosphate synthase (162 aa).

A divalent metal cation is bound by residues Asp12 and His14. 4-CDP-2-C-methyl-D-erythritol 2-phosphate is bound by residues 12-14 (DVH) and 38-39 (HS). His46 is a binding site for a divalent metal cation. 4-CDP-2-C-methyl-D-erythritol 2-phosphate contacts are provided by residues 60 to 62 (DIG), 65 to 69 (FPDTD), Phe143, and Arg146.

Belongs to the IspF family. Homotrimer. A divalent metal cation is required as a cofactor.

The catalysed reaction is 4-CDP-2-C-methyl-D-erythritol 2-phosphate = 2-C-methyl-D-erythritol 2,4-cyclic diphosphate + CMP. It participates in isoprenoid biosynthesis; isopentenyl diphosphate biosynthesis via DXP pathway; isopentenyl diphosphate from 1-deoxy-D-xylulose 5-phosphate: step 4/6. Its function is as follows. Involved in the biosynthesis of isopentenyl diphosphate (IPP) and dimethylallyl diphosphate (DMAPP), two major building blocks of isoprenoid compounds. Catalyzes the conversion of 4-diphosphocytidyl-2-C-methyl-D-erythritol 2-phosphate (CDP-ME2P) to 2-C-methyl-D-erythritol 2,4-cyclodiphosphate (ME-CPP) with a corresponding release of cytidine 5-monophosphate (CMP). The protein is 2-C-methyl-D-erythritol 2,4-cyclodiphosphate synthase of Azoarcus sp. (strain BH72).